The chain runs to 390 residues: MENFTYYNPTKLIFGKGQLEQLRKEFKRYGKNVLLVYGGGSIKRNGLYDQVTGILKEEGAVVHELSGVEPNPRLATVEKGIGLCREHDIDFLLAVGGGSVIDCTKAIAAGVKYDGDAWDIFSKKVTAEDALPFGTVLTLAATGSEMNPDSVITNWETNEKFVWGSNVTHPRFSILDPENTFTVPENQTVYGMVDMMSHVFEQYFHNVENTPLQDRMCFAVLQTVIETAPKLLEDLENYELRETILYAGTIALNGTLQMGYFGDWASHTMEHAVSAVYDIPHAGGLAILFPNWMRYTLDTNVGRFKNLMLNMFDIDTEGKTDKEIALEGIDKLSAFWTSLGAPSRLADYNIGEEKLELIADIAAKEMEHGGFGNFQKLNKDDVLAILRASL.

Belongs to the iron-containing alcohol dehydrogenase family.

It functions in the pathway alcohol metabolism; butanol biosynthesis. The chain is Probable NADH-dependent butanol dehydrogenase 2 (yugK) from Bacillus subtilis (strain 168).